Reading from the N-terminus, the 222-residue chain is MKDLPADLRPREKLLARGPAALADAELLALLLRTGLKGQGVLQLAQALLDRFGGLSGLLATDTAELGSVKGLGPAKRAELAAVLEIARRSLASRLAQTPVFDSPQAVKDYLQLQLASKPHEVFAVLFLDTQHRLLAFEELFRGTLNQASVYPREVVKRALALNAAAAILAHNHPSGVAEPSRADEALTQALKAALALVDVRVLDHFVVARGSVVSFAERGLL.

The MPN domain maps to 100-222; it reads VFDSPQAVKD…VVSFAERGLL (123 aa). Zn(2+)-binding residues include histidine 171, histidine 173, and aspartate 184. The JAMM motif signature appears at 171 to 184; that stretch reads HNHPSGVAEPSRAD.

It belongs to the UPF0758 family.

The polypeptide is UPF0758 protein Mpe_A2695 (Methylibium petroleiphilum (strain ATCC BAA-1232 / LMG 22953 / PM1)).